The sequence spans 525 residues: Peptide chain release factor 3 (525 aa).

Residues 9–276 (AKRRTFAIIS…GFTRYAPAPQ (268 aa)) enclose the tr-type G domain. Residues 18 to 25 (SHPDAGKT), 86 to 90 (DTPGH), and 140 to 143 (NKFD) each bind GTP.

The protein belongs to the TRAFAC class translation factor GTPase superfamily. Classic translation factor GTPase family. PrfC subfamily.

It localises to the cytoplasm. Its function is as follows. Increases the formation of ribosomal termination complexes and stimulates activities of RF-1 and RF-2. It binds guanine nucleotides and has strong preference for UGA stop codons. It may interact directly with the ribosome. The stimulation of RF-1 and RF-2 is significantly reduced by GTP and GDP, but not by GMP. The protein is Peptide chain release factor 3 of Francisella tularensis subsp. mediasiatica (strain FSC147).